The chain runs to 164 residues: Lipocalin-like 1 protein (164 aa).

This sequence belongs to the calycin superfamily. Lipocalin family.

This Homo sapiens (Human) protein is Lipocalin-like 1 protein (LCNL1).